The following is a 1286-amino-acid chain: DNA-directed RNA polymerase 147 kDa polypeptide (1286 aa).

It belongs to the poxviridae DNA-directed RNA polymerase 147 kDa subunit family. As to quaternary structure, the DNA-dependent RNA polymerase used for intermediate and late genes expression consists of eight subunits Rpo30/OPG66, Rpo7/OPG90, Rpo22/OPG103, Rpo147/OPG105, Rpo18/OPG119, Rpo19/OPG131, Rpo132/OPG151 and Rpo35/OPG156. The same holoenzyme, with the addition of the transcription-specificity factor OPG109, is used for early gene expression.

The protein resides in the virion. The enzyme catalyses RNA(n) + a ribonucleoside 5'-triphosphate = RNA(n+1) + diphosphate. Its function is as follows. Part of the DNA-dependent RNA polymerase which catalyzes the transcription of viral DNA into RNA using the four ribonucleoside triphosphates as substrates. Responsible for the transcription of early, intermediate and late genes. DNA-dependent RNA polymerase associates with the early transcription factor (ETF), itself composed of OPG118 and OPG133, thereby allowing the early genes transcription. Late transcription, and probably also intermediate transcription, require newly synthesized RNA polymerase. This Variola virus (isolate Human/India/Ind3/1967) (VARV) protein is DNA-directed RNA polymerase 147 kDa polypeptide (OPG105).